The following is a 391-amino-acid chain: Histidinol-phosphate aminotransferase (391 aa).

Residue K248 is modified to N6-(pyridoxal phosphate)lysine.

The protein belongs to the class-II pyridoxal-phosphate-dependent aminotransferase family. Histidinol-phosphate aminotransferase subfamily. Homodimer. Requires pyridoxal 5'-phosphate as cofactor.

The enzyme catalyses L-histidinol phosphate + 2-oxoglutarate = 3-(imidazol-4-yl)-2-oxopropyl phosphate + L-glutamate. Its pathway is amino-acid biosynthesis; L-histidine biosynthesis; L-histidine from 5-phospho-alpha-D-ribose 1-diphosphate: step 7/9. This chain is Histidinol-phosphate aminotransferase, found in Shewanella oneidensis (strain ATCC 700550 / JCM 31522 / CIP 106686 / LMG 19005 / NCIMB 14063 / MR-1).